The sequence spans 878 residues: Valine--tRNA ligase (878 aa).

Residues 45-55 (PNVTGQLHMGH) carry the 'HIGH' region motif. The 'KMSKS' region motif lies at 524–528 (KMSKS). K527 contacts ATP. The stretch at 804 to 871 (PLKDLIDLEK…REKEVLEQRI (68 aa)) forms a coiled coil.

It belongs to the class-I aminoacyl-tRNA synthetase family. ValS type 1 subfamily. As to quaternary structure, monomer.

It is found in the cytoplasm. It catalyses the reaction tRNA(Val) + L-valine + ATP = L-valyl-tRNA(Val) + AMP + diphosphate. Catalyzes the attachment of valine to tRNA(Val). As ValRS can inadvertently accommodate and process structurally similar amino acids such as threonine, to avoid such errors, it has a 'posttransfer' editing activity that hydrolyzes mischarged Thr-tRNA(Val) in a tRNA-dependent manner. The polypeptide is Valine--tRNA ligase (Carboxydothermus hydrogenoformans (strain ATCC BAA-161 / DSM 6008 / Z-2901)).